Reading from the N-terminus, the 245-residue chain is Outer membrane protein assembly factor BamD (245 aa).

An N-terminal signal peptide occupies residues Met-1 to Gly-19. Cys-20 carries the N-palmitoyl cysteine lipid modification. Cys-20 is lipidated: S-diacylglycerol cysteine.

It belongs to the BamD family. In terms of assembly, part of the Bam complex, which is composed of the outer membrane protein BamA, and four lipoproteins BamB, BamC, BamD and BamE.

It is found in the cell outer membrane. Its function is as follows. Part of the outer membrane protein assembly complex, which is involved in assembly and insertion of beta-barrel proteins into the outer membrane. Constitutes, with BamA, the core component of the assembly machinery. The polypeptide is Outer membrane protein assembly factor BamD (Escherichia coli O157:H7).